Consider the following 798-residue polypeptide: MSSSQSPSTPSASLVDSSDSKHPDDLPQIYKRRSVWTSSEDAVSSSNSPEQTTPFTVREDTNADIARELDLPDDPEPHLVRRSSAPMVDEAGTSNWQDASEPLMPTVKIEDFLYFGPNETEDILRLNEQKAFEKAEKKKRKKKKKAVMPNPPGSSMCTEQSLSDLKARFGLGAVTLRVPSPEERADSPPAGFYTLYEGFFYGCLLWLPIPRLVLEYVTSYQIALSQITMRSLRHLLGILIRSYESETEITLAHLRNFLEIRRVPKSEVDRYYISPAKGKKIIDGFPSKDEPYTDHFFFVAIEDAIHEDLLGTVLTRWGILERTLKFLEPIPDDFLSAFHALSARKCDWLKHFSRERVECALRLLHGVSCPTSSESSDHRTQFFVDMQSTKLTLREVYAKKKEDKERRLAEERRLVNTGLISPRADPEATQDGNVIPDATAPQTAPEASRDGVNPYTAGPVDAAPAEAQGAEPSAAAPEAVLALPAIDKAAGKRIRVDDVSSKKKKKKKKASGSEVEKILPIFEDRTASANLLGGCVGPLLPPPDTLLESRKYAETASHFLRAVASMNRMVHSYDSAMRSNMEVAGKLAEAESRIQAIEREKNEALSEAAAAKLEKEEVERTAHVNKENAIKMAEQNLKANSEIVRLKRMLSEARGLRDSEVARAVQTTRREVSETFIAKMKNAEHKVSLLDEVNDRFMYLSQARANAQLIEALEGGGVLESEKEQVDEWLKDFADAEVNLNRFMSELKDDLKAPAPEPAPLSPGGHRSVESLADEAGITDQAGSLLPAKDNRPSEDLD.

Low complexity predominate over residues 1–13 (MSSSQSPSTPSAS). The transit peptide at 1-58 (MSSSQSPSTPSASLVDSSDSKHPDDLPQIYKRRSVWTSSEDAVSSSNSPEQTTPFTVR) directs the protein to the chloroplast. Disordered regions lie at residues 1–99 (MSSS…WQDA), 135–158 (AEKK…SMCT), and 417–473 (TGLI…AEPS). Over residues 35–55 (VWTSSEDAVSSSNSPEQTTPF) the composition is skewed to polar residues. The segment covering 57–79 (VREDTNADIARELDLPDDPEPHL) has biased composition (basic and acidic residues). A compositionally biased stretch (basic residues) spans 137 to 146 (KKKRKKKKKA). A compositionally biased stretch (low complexity) spans 462 to 473 (AAPAEAQGAEPS). A coiled-coil region spans residues 578-658 (RSNMEVAGKL…MLSEARGLRD (81 aa)). Residues 749 to 798 (DDLKAPAPEPAPLSPGGHRSVESLADEAGITDQAGSLLPAKDNRPSEDLD) form a disordered region. A Phosphoserine modification is found at S762. Positions 789-798 (KDNRPSEDLD) are enriched in basic and acidic residues.

It localises to the plastid. Its subcellular location is the chloroplast. This is an uncharacterized protein from Arabidopsis thaliana (Mouse-ear cress).